The following is a 237-amino-acid chain: Ras-related protein Rab-33A (237 aa).

GTP is bound by residues N46, V47, G48, K49, T50, C51, T65, and T68. T50 provides a ligand contact to Mg(2+). The Switch 1 motif lies at 59-71 (GTFPDKTEATIGV). Mg(2+)-binding residues include T68 and D91. A Switch 2 motif is present at residues 92 to 111 (TAGQERFRKSMVEHYYRNVH). 6 residues coordinate GTP: G94, N151, K152, D154, A182, and K183. 2 S-geranylgeranyl cysteine lipidation sites follow: C235 and C237. At C237 the chain carries Cysteine methyl ester.

Belongs to the small GTPase superfamily. Rab family. In terms of assembly, interacts with ATG16L1; the interaction is important for autophagosome formation. The cofactor is Mg(2+). As to expression, expressed predominantly in brain. Weak expression in ovary.

It localises to the cell membrane. The enzyme catalyses GTP + H2O = GDP + phosphate + H(+). Regulated by guanine nucleotide exchange factors (GEFs) which promote the exchange of bound GDP for free GTP. Regulated by GTPase activating proteins (GAPs) which increase the GTP hydrolysis activity. Inhibited by GDP dissociation inhibitors (GDIs). Its function is as follows. The small GTPases Rab are key regulators of intracellular membrane trafficking, from the formation of transport vesicles to their fusion with membranes. Rabs cycle between an inactive GDP-bound form and an active GTP-bound form that is able to recruit to membranes different sets of downstream effectors directly responsible for vesicle formation, movement, tethering and fusion. Modulates autophagosome formation through interaction with ATG16L1. This chain is Ras-related protein Rab-33A, found in Mus musculus (Mouse).